The following is a 314-amino-acid chain: Putative S-adenosyl-L-methionine-dependent methyltransferase MAP_0256 (314 aa).

Residues aspartate 132 and 161-162 (DL) each bind S-adenosyl-L-methionine.

This sequence belongs to the UPF0677 family.

In terms of biological role, exhibits S-adenosyl-L-methionine-dependent methyltransferase activity. The polypeptide is Putative S-adenosyl-L-methionine-dependent methyltransferase MAP_0256 (Mycolicibacterium paratuberculosis (strain ATCC BAA-968 / K-10) (Mycobacterium paratuberculosis)).